Reading from the N-terminus, the 75-residue chain is Small ribosomal subunit protein bS18c (75 aa).

The protein belongs to the bacterial ribosomal protein bS18 family. As to quaternary structure, part of the 30S ribosomal subunit.

It localises to the plastid. It is found in the chloroplast. The chain is Small ribosomal subunit protein bS18c (rps18) from Anthoceros angustus (Hornwort).